The sequence spans 250 residues: ATP synthase subunit a (250 aa).

A run of 6 helical transmembrane segments spans residues 29–49 (ASLF…FATS), 84–104 (FFPL…LGMF), 114–134 (IIVT…YGFY), 143–163 (VFVP…IEII), 193–213 (FVAS…LPLI), and 216–236 (VALT…FAVL).

The protein belongs to the ATPase A chain family. F-type ATPases have 2 components, CF(1) - the catalytic core - and CF(0) - the membrane proton channel. CF(1) has five subunits: alpha(3), beta(3), gamma(1), delta(1), epsilon(1). CF(0) has three main subunits: a(1), b(2) and c(9-12). The alpha and beta chains form an alternating ring which encloses part of the gamma chain. CF(1) is attached to CF(0) by a central stalk formed by the gamma and epsilon chains, while a peripheral stalk is formed by the delta and b chains.

It is found in the cell inner membrane. Its function is as follows. Key component of the proton channel; it plays a direct role in the translocation of protons across the membrane. The sequence is that of ATP synthase subunit a from Rhizobium etli (strain CIAT 652).